We begin with the raw amino-acid sequence, 359 residues long: Outer membrane protein assembly factor BamC (359 aa).

The signal sequence occupies residues 1–21; the sequence is MSTLNKYKTLIIISSLAAVSS. Cysteine 22 carries N-palmitoyl cysteine lipidation. Cysteine 22 is lipidated: S-diacylglycerol cysteine.

This sequence belongs to the BamC family. Part of the Bam complex.

The protein localises to the cell outer membrane. Its function is as follows. Part of the outer membrane protein assembly complex, which is involved in assembly and insertion of beta-barrel proteins into the outer membrane. This is Outer membrane protein assembly factor BamC from Kangiella koreensis (strain DSM 16069 / JCM 12317 / KCTC 12182 / SW-125).